The sequence spans 243 residues: ATP-dependent dethiobiotin synthetase BioD (243 aa).

Residue 12–17 coordinates ATP; that stretch reads DVGKTL. Residue threonine 16 coordinates Mg(2+). Residue lysine 37 is part of the active site. Serine 41 provides a ligand contact to substrate. Residues aspartate 54, 115–118, and 179–180 each bind ATP; these read EGCG and NM. 2 residues coordinate Mg(2+): aspartate 54 and glutamate 115.

It belongs to the dethiobiotin synthetase family. Homodimer. The cofactor is Mg(2+).

The protein resides in the cytoplasm. The catalysed reaction is (7R,8S)-7,8-diammoniononanoate + CO2 + ATP = (4R,5S)-dethiobiotin + ADP + phosphate + 3 H(+). It functions in the pathway cofactor biosynthesis; biotin biosynthesis; biotin from 7,8-diaminononanoate: step 1/2. Its function is as follows. Catalyzes a mechanistically unusual reaction, the ATP-dependent insertion of CO2 between the N7 and N8 nitrogen atoms of 7,8-diaminopelargonic acid (DAPA, also called 7,8-diammoniononanoate) to form a ureido ring. The chain is ATP-dependent dethiobiotin synthetase BioD from Caldicellulosiruptor saccharolyticus (strain ATCC 43494 / DSM 8903 / Tp8T 6331).